Here is a 40-residue protein sequence, read N- to C-terminus: Muscarinic m1-toxin3 (40 aa).

Cysteines 3 and 24 form a disulfide.

This sequence belongs to the three-finger toxin family. Short-chain subfamily. Aminergic toxin sub-subfamily. In terms of assembly, monomer. Contains 4 disulfide bonds. In terms of tissue distribution, expressed by the venom gland.

Its subcellular location is the secreted. Binds irreversibly and specifically to M1 (CHRM1) muscarinic acetylcholine receptors, blocking further binding of antagonists and preventing the action of agonists. In Dendroaspis angusticeps (Eastern green mamba), this protein is Muscarinic m1-toxin3.